The primary structure comprises 95 residues: Small ribosomal subunit protein uS17 (95 aa).

This sequence belongs to the universal ribosomal protein uS17 family. Part of the 30S ribosomal subunit.

In terms of biological role, one of the primary rRNA binding proteins, it binds specifically to the 5'-end of 16S ribosomal RNA. In Mycoplasmopsis synoviae (strain 53) (Mycoplasma synoviae), this protein is Small ribosomal subunit protein uS17.